The primary structure comprises 456 residues: Solute carrier family 49 member 4 homolog (456 aa).

Residues 1–29 (MGLEWSSPGERQPLLYPGGPRAPRVFGRR) lie on the Cytoplasmic side of the membrane. Residues 14–15 (LL) carry the Di-leucine motif; mediates lysosomal localization motif. Residues 30 to 50 (WLVLLLFSLLAFLQGLVWNSW) form a helical membrane-spanning segment. At 51–67 (GPIQNSARTAYNFSGLD) the chain is on the lumenal side. An N-linked (GlcNAc...) asparagine glycan is attached at N62. Residues 68–88 (IALLVLWGPIGFLPCFLFMWL) traverse the membrane as a helical segment. Residues 89-95 (MDNRGLR) are Cytoplasmic-facing. Residues 96-116 (VTVLLTALLMVLGAGLRCVPV) form a helical membrane-spanning segment. Residues 117-131 (QDLAVRRKLIHGGQL) lie on the Lumenal side of the membrane. The helical transmembrane segment at 132-152 (LNGFAGPTVMNAAPFLSTTWF) threads the bilayer. The Cytoplasmic portion of the chain corresponds to 153 to 162 (SPDERATATA). The helical transmembrane segment at 163-183 (IASMLSYLGGACAFLVGPLVV) threads the bilayer. Residues 184 to 207 (PAPNSTSGLLLYSGSVGAIRDRIE) lie on the Lumenal side of the membrane. The N-linked (GlcNAc...) asparagine glycan is linked to N187. The helical transmembrane segment at 208–228 (AVMYAEFGIIFVVFAAILAYF) threads the bilayer. At 229–259 (PSRPPVPPSVAAASRRLSYRTSILRLLSNVR) the chain is on the cytoplasmic side. The helical transmembrane segment at 260–280 (FLLIVLAYAIPLGFYAGWSGV) threads the bilayer. Residues 281–292 (LDLILTPVHVTQ) are Lumenal-facing. The chain crosses the membrane as a helical span at residues 293 to 313 (VDAGWVGFWSIVGGCVVGIAV). The Cytoplasmic segment spans residues 314–326 (GRFADSIRGVLKP). The helical transmembrane segment at 327–347 (ILLLLFSGAALSSTWFTLTFL) threads the bilayer. Topologically, residues 348–362 (SNVTHLPLTTATLYT) are lumenal. An N-linked (GlcNAc...) asparagine glycan is attached at N349. Residues 363–383 (SCILIGVFLSGTVPIFFEMFV) traverse the membrane as a helical segment. Over 384-392 (ETVYPIPEG) the chain is Cytoplasmic. A helical membrane pass occupies residues 393-413 (ITCGVVTFLSNLFMGVLLLFL). Residues 414 to 420 (TLYQTNL) lie on the Lumenal side of the membrane. N419 carries an N-linked (GlcNAc...) asparagine glycan. Residues 421–441 (SWLNWCLTGSCFLSLLFIACF) form a helical membrane-spanning segment. Residues 442–456 (RESYDRLYLDVFVSV) are Cytoplasmic-facing.

This sequence belongs to the major facilitator superfamily.

The protein resides in the lysosome membrane. The catalysed reaction is pyridoxine(out) + n H(+)(out) = pyridoxine(in) + n H(+)(in). In terms of biological role, mediates H(+)-dependent pyridoxine transport. The polypeptide is Solute carrier family 49 member 4 homolog (slc49a4) (Xenopus tropicalis (Western clawed frog)).